The following is a 290-amino-acid chain: Arylamine N-acetyltransferase 2 (290 aa).

Cysteine 68 serves as the catalytic Acyl-thioester intermediate. Positions 103 and 104 each coordinate CoA. 106–107 is a binding site for substrate; that stretch reads VH. Catalysis depends on residues histidine 107 and aspartate 122. Positions 208, 214, and 287 each coordinate CoA.

Belongs to the arylamine N-acetyltransferase family.

The protein localises to the cytoplasm. It catalyses the reaction an arylamine + acetyl-CoA = an N-acetylarylamine + CoA. The enzyme catalyses an N-hydroxyarylamine + acetyl-CoA = an N-acetoxyarylamine + CoA. Its function is as follows. Catalyzes the N- or O-acetylation of various arylamine and heterocyclic amine substrates. Participates in the detoxification of a plethora of hydrazine and arylamine drugs, and is able to bioactivate several known carcinogens. The chain is Arylamine N-acetyltransferase 2 (NAT2) from Homo sapiens (Human).